A 339-amino-acid chain; its full sequence is Transmembrane protein 120B (339 aa).

Residues 1–77 are a coiled coil; the sequence is MSGQLERCER…ASREEAELVQ (77 aa). Helical transmembrane passes span 102-124, 132-152, 159-179, 187-207, 270-290, and 302-322; these read GLYLNLVLGNVNVTLLSNQAKFA, FKLYLTIILLLGAVACRFVLH, VFNFLLVWYYCTLTIRESILI, GWWVSHHYVSTFLSGVMLTWP, FLLPFLFCGHFWQLYNAVTLF, and QVFVLAFTFLILFLGNFLTTL.

Belongs to the TMEM120 family. As to quaternary structure, heterooligomer with TMEM120A.

It localises to the nucleus inner membrane. Functionally, necessary for efficient adipogenesis. Does not show ion channel activity. The polypeptide is Transmembrane protein 120B (Homo sapiens (Human)).